The primary structure comprises 522 residues: Putative thymidine phosphorylase (522 aa).

This sequence belongs to the thymidine/pyrimidine-nucleoside phosphorylase family. Type 2 subfamily.

The catalysed reaction is thymidine + phosphate = 2-deoxy-alpha-D-ribose 1-phosphate + thymine. The protein is Putative thymidine phosphorylase of Albidiferax ferrireducens (strain ATCC BAA-621 / DSM 15236 / T118) (Rhodoferax ferrireducens).